Consider the following 948-residue polypeptide: Non-lysosomal glucosylceramidase (948 aa).

The Extracellular segment spans residues 1 to 736 (MAEPLAVETK…VMDGPSAYCS (736 aa)). Over residues 177-195 (STRDKTSDPDGDPDGERTK) the composition is skewed to basic and acidic residues. The segment at 177 to 197 (STRDKTSDPDGDPDGERTKCQ) is disordered. The N-linked (GlcNAc...) asparagine glycan is linked to asparagine 200. A Phosphoserine modification is found at serine 214. Asparagine 288, asparagine 555, and asparagine 629 each carry an N-linked (GlcNAc...) asparagine glycan. Residues serine 667 and serine 669 each carry the phosphoserine modification. A glycan (N-linked (GlcNAc...) asparagine) is linked at asparagine 673. The helical transmembrane segment at 737-753 (GLWLAALQAMSAMATIL) threads the bilayer. Residues 754-948 (DQPNDCLRYQ…ALERRRAQRD (195 aa)) are Cytoplasmic-facing.

This sequence belongs to the non-lysosomal glucosylceramidase family.

It is found in the cell membrane. The enzyme catalyses a beta-D-glucosyl-(1&lt;-&gt;1')-N-acylsphing-4-enine + H2O = an N-acylsphing-4-enine + D-glucose. Functionally, non-lysosomal glucosylceramidase that catalyzes the conversion of glucosylceramide to free glucose and ceramide. This Drosophila melanogaster (Fruit fly) protein is Non-lysosomal glucosylceramidase.